Consider the following 301-residue polypeptide: Chitosanase (301 aa).

Positions 1-42 are cleaved as a signal peptide; it reads MHMSNARPSKSRTKFLLAFLCFTLMASLFGATALFGPSKAAA. The Proton donor role is filled by Glu-79. A disulfide bridge links Cys-92 with Cys-166. Residue Asp-97 is the Nucleophile of the active site.

Belongs to the glycosyl hydrolase 46 family.

Its subcellular location is the secreted. It catalyses the reaction Endohydrolysis of beta-(1-&gt;4)-linkages between D-glucosamine residues in a partly acetylated chitosan.. Functionally, aids in the defense against invading fungal pathogens by degrading their cell wall chitosan. In Niallia circulans (Bacillus circulans), this protein is Chitosanase (csn).